We begin with the raw amino-acid sequence, 81 residues long: uncharacterized protein (81 aa).

This sequence belongs to the ycf70 family.

The protein localises to the plastid. It localises to the chloroplast. This is an uncharacterized protein from Saccharum officinarum (Sugarcane).